We begin with the raw amino-acid sequence, 148 residues long: MKVIFLKDVKGKGKKGETKNVADGYANNFLIKNGYAVEANNAALSTLSAQKKKEDKLAAEELAEAKALKEKMENLTVELKAKSGEGGRLFGSITSKQIAQTLEKTHGIKIDKRKMDLPEAIRALGHTKVPVKLHHEVTATLDVHVSEE.

The protein belongs to the bacterial ribosomal protein bL9 family.

In terms of biological role, binds to the 23S rRNA. The chain is Large ribosomal subunit protein bL9 from Listeria monocytogenes serotype 4b (strain CLIP80459).